Reading from the N-terminus, the 95-residue chain is Aspartyl/glutamyl-tRNA(Asn/Gln) amidotransferase subunit C (95 aa).

It belongs to the GatC family. Heterotrimer of A, B and C subunits.

The enzyme catalyses L-glutamyl-tRNA(Gln) + L-glutamine + ATP + H2O = L-glutaminyl-tRNA(Gln) + L-glutamate + ADP + phosphate + H(+). It catalyses the reaction L-aspartyl-tRNA(Asn) + L-glutamine + ATP + H2O = L-asparaginyl-tRNA(Asn) + L-glutamate + ADP + phosphate + 2 H(+). Allows the formation of correctly charged Asn-tRNA(Asn) or Gln-tRNA(Gln) through the transamidation of misacylated Asp-tRNA(Asn) or Glu-tRNA(Gln) in organisms which lack either or both of asparaginyl-tRNA or glutaminyl-tRNA synthetases. The reaction takes place in the presence of glutamine and ATP through an activated phospho-Asp-tRNA(Asn) or phospho-Glu-tRNA(Gln). This is Aspartyl/glutamyl-tRNA(Asn/Gln) amidotransferase subunit C from Rhizorhabdus wittichii (strain DSM 6014 / CCUG 31198 / JCM 15750 / NBRC 105917 / EY 4224 / RW1) (Sphingomonas wittichii).